The following is a 112-amino-acid chain: Nucleoid-associated protein CPR_0056 (112 aa).

A compositionally biased stretch (basic and acidic residues) spans 91-100 (ASEETSEKMG). Residues 91–112 (ASEETSEKMGKLTGGMGMPGLF) form a disordered region. Positions 102-112 (LTGGMGMPGLF) are enriched in gly residues.

It belongs to the YbaB/EbfC family. In terms of assembly, homodimer.

The protein localises to the cytoplasm. Its subcellular location is the nucleoid. Functionally, binds to DNA and alters its conformation. May be involved in regulation of gene expression, nucleoid organization and DNA protection. The protein is Nucleoid-associated protein CPR_0056 of Clostridium perfringens (strain SM101 / Type A).